The chain runs to 304 residues: N-acetylmuramic acid 6-phosphate etherase (304 aa).

The region spanning 57-220 is the SIS domain; that stretch reads AVKGLSAGGR…STATMVGLGK (164 aa). E85 (proton donor) is an active-site residue. The active site involves E116.

The protein belongs to the GCKR-like family. MurNAc-6-P etherase subfamily. As to quaternary structure, homodimer.

It carries out the reaction N-acetyl-D-muramate 6-phosphate + H2O = N-acetyl-D-glucosamine 6-phosphate + (R)-lactate. The protein operates within amino-sugar metabolism; N-acetylmuramate degradation. In terms of biological role, specifically catalyzes the cleavage of the D-lactyl ether substituent of MurNAc 6-phosphate, producing GlcNAc 6-phosphate and D-lactate. The protein is N-acetylmuramic acid 6-phosphate etherase of Cutibacterium acnes (strain DSM 16379 / KPA171202) (Propionibacterium acnes).